A 30-amino-acid polypeptide reads, in one-letter code: Root cyclotide 1 (30 aa).

The cyclopeptide (Gly-Asn) cross-link spans 1–30 (GIPCAESCVWIPCTVTALLGCSCSNKVCYN). Cystine bridges form between Cys-4/Cys-21, Cys-8/Cys-23, and Cys-13/Cys-28.

Post-translationally, this is a cyclic peptide. As to expression, expressed in roots.

Its function is as follows. Probably participates in a plant defense mechanism. The sequence is that of Root cyclotide 1 from Viola hederacea (Australian violet).